The sequence spans 541 residues: Formimidoyltransferase-cyclodeaminase (541 aa).

The interval 1 to 181 is formiminotransferase N-subdomain; that stretch reads MSQLVECVPN…GATVTGARKF (181 aa). Residue His82 is the For formimidoyltransferase activity of the active site. Folate is bound at residue 163 to 172; it reads GPSSFVPSWG. Residues 182–326 are formiminotransferase C-subdomain; sequence LIAFNINLLS…PKERIIEYLV (145 aa). The tract at residues 327-334 is linker; sequence PDSGPEQS. The cyclodeaminase/cyclohydrolase stretch occupies residues 335 to 541; sequence LLDASLRAFV…VLGSLEARKE (207 aa). Residue Asp412 is the For cyclodeaminase activity of the active site. Residue Ser520 is modified to Phosphoserine.

In the C-terminal section; belongs to the cyclodeaminase/cyclohydrolase family. This sequence in the N-terminal section; belongs to the formiminotransferase family. Homooctamer, including four polyglutamate binding sites. The subunits are arranged as a tetramer of dimers, and form a planar ring-shaped structure. Specifically expressed in liver (at protein level).

Its subcellular location is the cytoplasm. It localises to the cytosol. It is found in the golgi apparatus. The protein resides in the cytoskeleton. The protein localises to the microtubule organizing center. Its subcellular location is the centrosome. It localises to the centriole. The enzyme catalyses 5-formimidoyltetrahydrofolate + L-glutamate = N-formimidoyl-L-glutamate + (6S)-5,6,7,8-tetrahydrofolate. The catalysed reaction is 5-formimidoyltetrahydrofolate + 2 H(+) = (6R)-5,10-methenyltetrahydrofolate + NH4(+). The protein operates within amino-acid degradation; L-histidine degradation into L-glutamate; L-glutamate from N-formimidoyl-L-glutamate (transferase route): step 1/1. Functionally, folate-dependent enzyme, that displays both transferase and deaminase activity. Serves to channel one-carbon units from formiminoglutamate to the folate pool. Binds and promotes bundling of vimentin filaments originating from the Golgi. This is Formimidoyltransferase-cyclodeaminase (Ftcd) from Rattus norvegicus (Rat).